The following is a 221-amino-acid chain: Cyclin-U3-1 (221 aa).

Belongs to the cyclin family. Cyclin U/P subfamily. Interacts with CDKA-1 and CDKB1-1. In terms of tissue distribution, expressed in roots, stems and flowers. Expressed in the shoot apex, leaf primordia and young leaves.

The protein is Cyclin-U3-1 (CYCU3-1) of Arabidopsis thaliana (Mouse-ear cress).